The chain runs to 621 residues: Nuclear distribution protein nudE homolog 1 (621 aa).

2 stretches are compositionally biased toward polar residues: residues 1-20 (MPSADGSSSARPNGTSSRSD) and 231-263 (RSPSTPQTPDLFNRSPASSIVSSPLFSTPTLKT). Disordered regions lie at residues 1-21 (MPSADGSSSARPNGTSSRSDQ), 218-372 (ELQN…PKSG), 389-537 (ERVQ…GVVN), and 569-621 (ISTP…GETY). Positions 18–219 (RSDQLAWYKS…IHEKLRNAEL (202 aa)) form a coiled coil. Composition is skewed to low complexity over residues 264-288 (SLMSATATPPSPPISESSSSLRKSM) and 300-310 (SASDSSFGSRS). The segment covering 323–341 (SRATSYAFTSNRPTPSVTN) has biased composition (polar residues). 3 stretches are compositionally biased toward low complexity: residues 353–362 (NENTNKHNNN), 404–414 (SPSRTSSRSGS), and 469–496 (SRPSSRTSYSSHSSVSHSTHPSVTPSTR). Residues 599–613 (DRLEGDMGPPERKSN) are compositionally biased toward basic and acidic residues.

Belongs to the nudE family. Self-associates. Interacts with nudF.

Its subcellular location is the cytoplasm. The protein localises to the cytoskeleton. In terms of biological role, required for nuclear migration within hyphae during vegetative growth. In Aspergillus fumigatus (strain ATCC MYA-4609 / CBS 101355 / FGSC A1100 / Af293) (Neosartorya fumigata), this protein is Nuclear distribution protein nudE homolog 1 (nde1).